We begin with the raw amino-acid sequence, 162 residues long: Large ribosomal subunit protein eL24 (162 aa).

Disordered stretches follow at residues 64-83 (DIHA…PYSR) and 117-162 (ERIK…GGKR). A compositionally biased stretch (basic residues) spans 71–81 (KKRRRTTKKPY). Residues 117 to 135 (ERIKKTKDEKKAKKAEVTK) are compositionally biased toward basic and acidic residues.

The protein belongs to the eukaryotic ribosomal protein eL24 family.

The protein localises to the cytoplasm. This chain is Large ribosomal subunit protein eL24 (RPL24), found in Hordeum vulgare (Barley).